The chain runs to 126 residues: Large ribosomal subunit protein bL17 (126 aa).

Belongs to the bacterial ribosomal protein bL17 family. As to quaternary structure, part of the 50S ribosomal subunit. Contacts protein L32.

This Aliivibrio salmonicida (strain LFI1238) (Vibrio salmonicida (strain LFI1238)) protein is Large ribosomal subunit protein bL17.